We begin with the raw amino-acid sequence, 380 residues long: Protein Wnt-5a (380 aa).

The signal sequence occupies residues 1–35; sequence MKKSIGILSPGVALGMAGSAMSSKFFLVALAIFFS. The propeptide occupies 36–61; that stretch reads FAQVVIEANSWWSLGMNNPVQMSEVY. C104 and C115 form a disulfide bridge. N-linked (GlcNAc...) asparagine glycans are attached at residues N114 and N120. 10 disulfides stabilise this stretch: C154–C162, C164–C182, C238–C252, C240–C247, C309–C340, C325–C335, C339–C379, C355–C370, C357–C367, and C362–C363. Residue S244 is the site of O-palmitoleoyl serine; by PORCN attachment. N-linked (GlcNAc...) asparagine glycosylation is found at N312 and N326.

Belongs to the Wnt family. As to quaternary structure, forms a soluble 1:1 complex with AFM; this prevents oligomerization and is required for prolonged biological activity. The complex with AFM may represent the physiological form in body fluids. Homooligomer; disulfide-linked, leading to inactivation (in vitro). Interacts with PORCN. Interacts with WLS. Interacts with glypican GCP3. Interacts with PKD1 (via extracellular domain). Interacts with TMEM67. Glycosylation is necessary for secretion but not for activity. In terms of processing, palmitoleoylation is required for efficient binding to frizzled receptors. Depalmitoleoylation leads to Wnt signaling pathway inhibition. Post-translationally, proteolytic processing by TIKI1 and TIKI2 promotes oxidation and formation of large disulfide-bond oligomers, leading to inactivation of WNT5A. Expression is increased in differentiated thyroid carcinomas compared to normal thyroid tissue and anaplastic thyroid tumors where expression is low or undetectable. Expression is found in thyrocytes but not in stromal cells (at protein level). Detected in neonate heart and lung.

The protein localises to the secreted. The protein resides in the extracellular space. It localises to the extracellular matrix. Its function is as follows. Ligand for members of the frizzled family of seven transmembrane receptors. Can activate or inhibit canonical Wnt signaling, depending on receptor context. In the presence of FZD4, activates beta-catenin signaling. In the presence of ROR2, inhibits the canonical Wnt pathway by promoting beta-catenin degradation through a GSK3-independent pathway which involves down-regulation of beta-catenin-induced reporter gene expression. Suppression of the canonical pathway allows chondrogenesis to occur and inhibits tumor formation. Stimulates cell migration. Decreases proliferation, migration, invasiveness and clonogenicity of carcinoma cells and may act as a tumor suppressor. Mediates motility of melanoma cells. Required during embryogenesis for extension of the primary anterior-posterior axis and for outgrowth of limbs and the genital tubercle. Inhibits type II collagen expression in chondrocytes. The chain is Protein Wnt-5a (WNT5A) from Homo sapiens (Human).